Consider the following 462-residue polypeptide: Protein MOS2 (462 aa).

Low complexity predominate over residues 1–10 (MKLSFSLPSK). The disordered stretch occupies residues 1-32 (MKLSFSLPSKSKPKVTATTADGNNAVDDGTSK). A G-patch domain is found at 156 to 202 (VDGFGAALMAGYGWKPGKGIGKNAKEDVEIKEYKKWTAKEGLGFDPD). In terms of domain architecture, KOW 1 spans 231–258 (VFFVGKEVRIIAGRDVGLKGKIVEKPGS). Over residues 301–336 (DREKDKKTSGRGRGAERGSRSEVRASEKQDRGQTRE) the composition is skewed to basic and acidic residues. The disordered stretch occupies residues 301-340 (DREKDKKTSGRGRGAERGSRSEVRASEKQDRGQTRERKVK). The KOW 2 domain occupies 401 to 428 (LPRRGGPVLVLSGKHKGVYGNLVEKDLD).

This sequence belongs to the MOS2 family.

It is found in the nucleus. Functionally, required for innate and induced resistance to pathogens such as compatible and incompatible isolates of P.syringae and P.parasitica. The chain is Protein MOS2 (MOS2) from Arabidopsis thaliana (Mouse-ear cress).